We begin with the raw amino-acid sequence, 316 residues long: Cation efflux system protein CzcD (316 aa).

A run of 6 helical transmembrane segments spans residues 17–37 (LKIALALTGTFLIAEVVGGVM), 47–67 (AAHMLTDTVALAIALAAIAIA), 82–102 (FEILAAAFNALLLFGVAIYIL), 115–135 (IESTGMFVVAVLGLIINLISM), 152–172 (YLEVWSDLLGSVGVIAGAIII), and 174–194 (FTGWAWVDSAIAVLIGLWVLP).

It belongs to the cation diffusion facilitator (CDF) transporter (TC 2.A.4) family. SLC30A subfamily.

It localises to the cell membrane. Necessary for activation of the czc determinant. This is Cation efflux system protein CzcD (czcD) from Alcaligenes sp. (strain CT14).